We begin with the raw amino-acid sequence, 482 residues long: Variant surface glycoprotein ANTAT 1.1C (482 aa).

The signal sequence occupies residues 1-8 (LHPQQALA). 2 cysteine pairs are disulfide-bonded: cysteine 24/cysteine 151 and cysteine 133/cysteine 188. An N-linked (GlcNAc...) asparagine glycan is attached at asparagine 92. N-linked (GlcNAc...) asparagine glycosylation is found at asparagine 398 and asparagine 411. A lipid anchor (GPI-anchor amidated aspartate) is attached at aspartate 459. A propeptide spans 460–482 (SSILVTKKFALSLVSAAFASLLF) (removed in mature form).

The protein resides in the cell membrane. In terms of biological role, VSG forms a coat on the surface of the parasite. The trypanosome evades the immune response of the host by expressing a series of antigenically distinct VSGs from an estimated 1000 VSG genes. The protein is Variant surface glycoprotein ANTAT 1.1C of Trypanosoma brucei brucei.